The sequence spans 239 residues: tRNA (guanine-N(1)-)-methyltransferase (239 aa).

Residues Gly-109 and 128–133 each bind S-adenosyl-L-methionine; that span reads IGDYVL.

It belongs to the RNA methyltransferase TrmD family. As to quaternary structure, homodimer.

It is found in the cytoplasm. It catalyses the reaction guanosine(37) in tRNA + S-adenosyl-L-methionine = N(1)-methylguanosine(37) in tRNA + S-adenosyl-L-homocysteine + H(+). In terms of biological role, specifically methylates guanosine-37 in various tRNAs. This chain is tRNA (guanine-N(1)-)-methyltransferase, found in Thermus thermophilus (strain ATCC 27634 / DSM 579 / HB8).